We begin with the raw amino-acid sequence, 251 residues long: Probable transcriptional regulatory protein MMAR_2098 (251 aa).

The protein belongs to the TACO1 family.

Its subcellular location is the cytoplasm. This chain is Probable transcriptional regulatory protein MMAR_2098, found in Mycobacterium marinum (strain ATCC BAA-535 / M).